We begin with the raw amino-acid sequence, 477 residues long: Argininosuccinate lyase (477 aa).

The protein belongs to the lyase 1 family. Argininosuccinate lyase subfamily.

Its subcellular location is the cytoplasm. It catalyses the reaction 2-(N(omega)-L-arginino)succinate = fumarate + L-arginine. Its pathway is amino-acid biosynthesis; L-arginine biosynthesis; L-arginine from L-ornithine and carbamoyl phosphate: step 3/3. This is Argininosuccinate lyase from Acinetobacter baumannii (strain ACICU).